Reading from the N-terminus, the 89-residue chain is MTAMAVSGKLLTALVLSTYILGLALTIQATQYEEDKYQENEVKYGRELASWLAQLAHKNEPAICAHKRNSEIINSLLGLPKLLNDAGRK.

The signal sequence occupies residues 1–22; sequence MTAMAVSGKLLTALVLSTYILG. Ala86 is subject to Alanine amide.

It belongs to the arthropod PDH family.

Its subcellular location is the secreted. Capable of inducing pigment dispersion in the chromatophores of the fiddler crab Uca pugilator. This is Pigment-dispersing hormone peptides from Romalea microptera (Eastern lubber grasshopper).